A 184-amino-acid polypeptide reads, in one-letter code: Endothelial cell-specific molecule 1 (184 aa).

The first 19 residues, 1 to 19 (MKSVLLLTTLLVPAHLVAA), serve as a signal peptide directing secretion. An IGFBP N-terminal domain is found at 24-102 (YAVDCPQHCD…GEEFGICKDC (79 aa)). 6 disulfide bridges follow: Cys-28–Cys-51, Cys-32–Cys-53, Cys-37–Cys-54, Cys-43–Cys-57, Cys-65–Cys-83, and Cys-77–Cys-99. The O-linked (Xyl...) (chondroitin sulfate) serine glycan is linked to Ser-156.

In terms of assembly, monomer. Post-translationally, may contain intrachain disulfide bonds. O-glycosylated; contains chondroitin sulfate and dermatan sulfate. Expressed in lung, on the vascular capillary network within alveolar walls, and also at lower level in kidney.

The protein localises to the secreted. Functionally, involved in angiogenesis; promotes angiogenic sprouting. May have potent implications in lung endothelial cell-leukocyte interactions. The chain is Endothelial cell-specific molecule 1 (ESM1) from Homo sapiens (Human).